A 399-amino-acid chain; its full sequence is Glycerol-1-phosphate dehydrogenase [NAD(P)+] (399 aa).

NAD(+)-binding positions include D56, 118-122 (GTIHD), and 140-143 (TAPS). D145 is a substrate binding site. S149 serves as a coordination point for NAD(+). D192 provides a ligand contact to substrate. Ni(2+) is bound by residues D192 and H272. Residue H276 participates in substrate binding. H292 provides a ligand contact to Ni(2+).

It belongs to the glycerol-1-phosphate dehydrogenase family. In terms of assembly, homodimer. Requires Ni(2+) as cofactor.

The protein localises to the cytoplasm. It carries out the reaction sn-glycerol 1-phosphate + NAD(+) = dihydroxyacetone phosphate + NADH + H(+). It catalyses the reaction sn-glycerol 1-phosphate + NADP(+) = dihydroxyacetone phosphate + NADPH + H(+). Catalyzes the NAD(P)H-dependent reduction of dihydroxyacetonephosphate (DHAP or glycerone phosphate) to glycerol 1-phosphate (G1P). The G1P thus generated is probably used for the synthesis of phosphoglycerolipids in Gram-positive bacterial species. The sequence is that of Glycerol-1-phosphate dehydrogenase [NAD(P)+] from Halalkalibacterium halodurans (strain ATCC BAA-125 / DSM 18197 / FERM 7344 / JCM 9153 / C-125) (Bacillus halodurans).